The following is a 595-amino-acid chain: MPACCSCSDVFQYETNKVTRIQSMNYGTIKWFFHVIIFSYVCFALVSDKLYQRKEPVISSVHTKVKGIAEVKEEIVENGVKKLVHSVFDTADYTFPLQGNSFFVMTNFLKTEGQEQRLCPEYPTRRTLCSSDRGCKKGWMDPQSKGIQTGRCVVYEGNQKTCEVSAWCPIEAVEEAPRPALLNSAENFTVLIKNNIDFPGHNYTTRNILPGLNITCTFHKTQNPQCPIFRLGDIFRETGDNFSDVAIQGGIMGIEIYWDCNLDRWFHHCRPKYSFRRLDDKTTNVSLYPGYNFRYAKYYKENNVEKRTLIKVFGIRFDILVFGTGGKFDIIQLVVYIGSTLSYFGLAAVFIDFLIDTYSSNCCRSHIYPWCKCCQPCVVNEYYYRKKCESIVEPKPTLKYVSFVDESHIRMVNQQLLGRSLQDVKGQEVPRPAMDFTDLSRLPLALHDTPPIPGQPEEIQLLRKEATPRSRDSPVWCQCGSCLPSQLPESHRCLEELCCRKKPGACITTSELFRKLVLSRHVLQFLLLYQEPLLALDVDSTNSRLRHCAYRCYATWRFGSQDMADFAILPSCCRWRIRKEFPKSEGQYSGFKSPY.

At 1-22 (MPACCSCSDVFQYETNKVTRIQ) the chain is on the cytoplasmic side. C4 carries the S-palmitoyl cysteine lipid modification. The chain crosses the membrane as a helical span at residues 23-46 (SMNYGTIKWFFHVIIFSYVCFALV). The Extracellular segment spans residues 47-328 (SDKLYQRKEP…ILVFGTGGKF (282 aa)). Cystine bridges form between C119–C168, C129–C152, and C135–C162. Residues R125 and R133 each carry the ADP-ribosylarginine modification. N187 carries N-linked (GlcNAc...) asparagine glycosylation. Residue T189 participates in ATP binding. 2 N-linked (GlcNAc...) asparagine glycosylation sites follow: N202 and N213. A disulfide bridge links C216 with C226. An N-linked (GlcNAc...) asparagine glycan is attached at N241. C260 and C269 are joined by a disulfide. N284 is a glycosylation site (N-linked (GlcNAc...) asparagine). Residues R294 and K311 each coordinate ATP. A helical membrane pass occupies residues 329-353 (DIIQLVVYIGSTLSYFGLAAVFIDF). A Na(+)-binding site is contributed by S342. Y343 is modified (phosphotyrosine). Topologically, residues 354–595 (LIDTYSSNCC…GQYSGFKSPY (242 aa)) are cytoplasmic. The interval 360 to 377 (SNCCRSHIYPWCKCCQPC) is C-cys anchor. Residues C362, C363, C374, and C377 are each lipidated (S-palmitoyl cysteine). A Phosphoserine modification is found at S390. Residues 395 to 595 (KPTLKYVSFV…GQYSGFKSPY (201 aa)) form a cytoplasmic ballast region. The Zn(2+) site is built by C479, C499, and C506. Residues R546, H547, Y550, and A567 each contribute to the GTP site. A Zn(2+)-binding site is contributed by C572. K583, S589, and G590 together coordinate GTP.

This sequence belongs to the P2X receptor family. As to quaternary structure, homotrimers. Interacts with LAMA3, ITGB2, ACTB, ACTN4, SVIL, MPP3, HSPA1, HSPCB, HSPA8, PIK230 and PTPRB. Interacts (via C-terminus) with EMP2. Interacts with isoform B; this interaction potentiates P2RX7 responses. Phosphorylation results in its inactivation. Post-translationally, ADP-ribosylation at Arg-125 is necessary and sufficient to activate P2RX7 and gate the channel. In terms of processing, palmitoylation of several cysteines in the C-terminal cytoplasmic tail is required for efficient localization to cell surface. Palmitoylation prevents channel desensitization by physically anchoring the palmitoylated groups to the membrane. Widely expressed with highest levels in brain and immune tissues. As to expression, predominant form in many tissues.

It localises to the cell membrane. The enzyme catalyses Ca(2+)(in) = Ca(2+)(out). It carries out the reaction K(+)(in) = K(+)(out). It catalyses the reaction Na(+)(in) = Na(+)(out). Its activity is regulated as follows. Activated by high extracellular ATP levels (0.1-2.5 mM). The synthetic analog 2'(3')-O-(4-benzoylbenzoyl)ATP (BzATP) acts as a potent agonist. Does not undergo desensitization, instead, undergoes a facilitation process where currents progressively increase with repetitive or prolonged agonist application. Palmitoylation prevents channel desensitization. The permeability of the P2RX7 channel is modulated by the amount of cholesterol in the plasma membrane. Its function is as follows. ATP-gated nonselective transmembrane cation channel that requires high millimolar concentrations of ATP for activation. Upon ATP binding, it rapidly opens to allow the influx of small cations Na(+) and Ca(2+), and the K(+) efflux. Also has the ability to form a large pore in the cell membrane, allowing the passage of large cationic molecules. In microglia, may mediate NADPH transport across the plasma membrane. In immune cells, P2RX7 acts as a molecular sensor in pathological inflammatory states by detecting and responding to high local concentrations of extracellar ATP. In microglial cells, P2RX7 activation leads to the release of pro-inflammatory cytokines, such as IL-1beta and IL-18, through the activation of the NLRP3 inflammasome and caspase-1. Cooperates with KCNK6 to activate NLRP3 inflammasome. Activates death pathways leading to apoptosis and autophagy. Activates death pathways leading to pyroptosis. Functionally, shows ion channel activity but no macropore function. In terms of biological role, non-functional channel. This chain is P2X purinoceptor 7 (P2RX7), found in Homo sapiens (Human).